The following is a 264-amino-acid chain: NAD-capped RNA hydrolase NudC (264 aa).

Arginine 70 contacts substrate. The Zn(2+) site is built by cysteine 99 and cysteine 102. Glutamate 112 is a binding site for substrate. The Zn(2+) site is built by cysteine 117 and cysteine 120. Residue tyrosine 125 participates in substrate binding. The Nudix hydrolase domain maps to 126 to 253 (PVICPSIIVA…TIARKLIHVT (128 aa)). 3 residues coordinate a divalent metal cation: alanine 162, glutamate 178, and glutamate 182. Positions 163–184 (GFVEVGETFEQAVQREVFEETG) match the Nudix box motif. 196–203 (QPWAFPNS) provides a ligand contact to substrate. Position 223 (glutamate 223) interacts with a divalent metal cation. Alanine 246 provides a ligand contact to substrate.

This sequence belongs to the Nudix hydrolase family. NudC subfamily. Homodimer. Mg(2+) serves as cofactor. Mn(2+) is required as a cofactor. It depends on Zn(2+) as a cofactor.

The catalysed reaction is a 5'-end NAD(+)-phospho-ribonucleoside in mRNA + H2O = a 5'-end phospho-adenosine-phospho-ribonucleoside in mRNA + beta-nicotinamide D-ribonucleotide + 2 H(+). It catalyses the reaction NAD(+) + H2O = beta-nicotinamide D-ribonucleotide + AMP + 2 H(+). It carries out the reaction NADH + H2O = reduced beta-nicotinamide D-ribonucleotide + AMP + 2 H(+). Its function is as follows. mRNA decapping enzyme that specifically removes the nicotinamide adenine dinucleotide (NAD) cap from a subset of mRNAs by hydrolyzing the diphosphate linkage to produce nicotinamide mononucleotide (NMN) and 5' monophosphate mRNA. The NAD-cap is present at the 5'-end of some mRNAs and stabilizes RNA against 5'-processing. Has preference for mRNAs with a 5'-end purine. Catalyzes the hydrolysis of a broad range of dinucleotide pyrophosphates. In Haemophilus influenzae (strain 86-028NP), this protein is NAD-capped RNA hydrolase NudC.